The chain runs to 187 residues: EP300-interacting inhibitor of differentiation 1 (187 aa).

Residues 1-118 (MSEMAELSEL…YDYPEEEQLS (118 aa)) form a disordered region. Composition is skewed to acidic residues over residues 52–63 (LEEEGPMEEEEA) and 93–116 (FESEDEGEEFDDWEDDYDYPEEEQ). The tract at residues 54 to 120 (EEGPMEEEEA…YPEEEQLSGA (67 aa)) is interaction with NR0B2. Residues 178–182 (LGCDE) carry the LXCXE motif motif.

As to quaternary structure, interacts via its LXCXE motif with the entire pocket region of RB1. Interacts with EP300, NR0B2 and TRIM27. Post-translationally, ubiquitinated in U2OS osteosarcoma cells and is rapidly degraded by proteasome as cells exit the cell cycle exit. In terms of tissue distribution, widely expressed. Most abundantly expressed in heart, skeletal muscle, pancreas, brain and testis. Expressed at much lower levels in placenta and peripheral blood leukocyte. Barely detectable in lung. Also weakly expressed in lung carcinoma A-549 and various leukemia cell lines.

It is found in the nucleus. Its subcellular location is the cytoplasm. Its function is as follows. Interacts with RB1 and EP300 and acts as a repressor of MYOD1 transactivation. Inhibits EP300 and CBP histone acetyltransferase activity. May be involved in coupling cell cycle exit to the transcriptional activation of genes required for cellular differentiation. May act as a candidate coinhibitory factor for NR0B2 that can be directly linked to transcription inhibitory mechanisms. This chain is EP300-interacting inhibitor of differentiation 1, found in Homo sapiens (Human).